The primary structure comprises 73 residues: Disintegrin lutosin (73 aa).

One can recognise a Disintegrin domain in the interval 1–73 (EAGEECDCGS…ADCPRNGLYG (73 aa)). Disulfide bonds link C6–C21, C8–C16, C15–C38, C29–C35, C34–C59, and C47–C66. The Cell attachment site motif lies at 51-53 (RGD).

This sequence belongs to the venom metalloproteinase (M12B) family. P-II subfamily. P-IIa sub-subfamily. In terms of assembly, monomer (disintegrin). In terms of tissue distribution, expressed by the venom gland.

Its subcellular location is the secreted. In terms of biological role, inhibits fibrinogen interaction with platelets. Acts by binding to alpha-IIb/beta-3 (ITGA2B/ITGB3) on the platelet surface and inhibits aggregation induced by ADP, thrombin, platelet-activating factor and collagen. This chain is Disintegrin lutosin, found in Crotalus lutosus (Great basin rattlesnake).